A 310-amino-acid polypeptide reads, in one-letter code: Olfactory receptor 5P52 (310 aa).

The Extracellular portion of the chain corresponds to 1 to 25 (MEAENHTTVAELIILGLTEDPKLCI). Residue asparagine 5 is glycosylated (N-linked (GlcNAc...) asparagine). A helical membrane pass occupies residues 26–46 (VFFVIFLGVYIITLVGNISII). Residues 47-54 (TLIRISSQ) are Cytoplasmic-facing. Residues 55 to 75 (LHTPMYLFLSHLAFVDIVFST) traverse the membrane as a helical segment. Residues 76 to 99 (SVSVIMLMELLGHGLVLSVATCAA) are Extracellular-facing. A disulfide bond links cysteine 97 and cysteine 189. The helical transmembrane segment at 100 to 120 (QLCMTVSFGSAECFLLAAMAY) threads the bilayer. At 121 to 133 (DRYVAICSPLLYS) the chain is on the cytoplasmic side. The chain crosses the membrane as a helical span at residues 134–154 (TLMSSRVCFLLLGISYVGGFV). Over 155–196 (NGWTFTGCVLSLSFCGPTQINHFFCDFSPLLKVSCSDVSIIG) the chain is Extracellular. Residues 197–217 (IIPSISSGSIIVVTVFVIAVS) traverse the membrane as a helical segment. The Cytoplasmic segment spans residues 218 to 237 (YIYILITILKMRSTEGRHKA). A helical membrane pass occupies residues 238–258 (FSTCTSHLTAVTLFYGTITVI). At 259 to 271 (YVMPKSSYSTEQN) the chain is on the extracellular side. A helical membrane pass occupies residues 272-292 (KVISLFYTVVIPMLNPLIYSL). Residues 293–310 (RNRDVKDALRKAIVRVYS) lie on the Cytoplasmic side of the membrane.

It belongs to the G-protein coupled receptor 1 family.

The protein localises to the cell membrane. Its function is as follows. Potential odorant receptor. The sequence is that of Olfactory receptor 5P52 from Mus musculus (Mouse).